The chain runs to 76 residues: ATP synthase subunit 9, mitochondrial (76 aa).

The next 2 membrane-spanning stretches (helical) occupy residues 14–34 (MATL…VALI) and 52–72 (ILGF…SFLL).

Belongs to the ATPase C chain family. F-type ATPases have 2 components, CF(1) - the catalytic core - and CF(0) - the membrane proton channel. CF(1) has five subunits: alpha(3), beta(3), gamma(1), delta(1), epsilon(1). CF(0) has three main subunits: a, b and c.

The protein resides in the mitochondrion membrane. In terms of biological role, mitochondrial membrane ATP synthase (F(1)F(0) ATP synthase or Complex V) produces ATP from ADP in the presence of a proton gradient across the membrane which is generated by electron transport complexes of the respiratory chain. F-type ATPases consist of two structural domains, F(1) - containing the extramembraneous catalytic core and F(0) - containing the membrane proton channel, linked together by a central stalk and a peripheral stalk. During catalysis, ATP synthesis in the catalytic domain of F(1) is coupled via a rotary mechanism of the central stalk subunits to proton translocation. Part of the complex F(0) domain. A homomeric c-ring of probably 10 subunits is part of the complex rotary element. The chain is ATP synthase subunit 9, mitochondrial (ATP9) from Debaryomyces hansenii (strain ATCC 36239 / CBS 767 / BCRC 21394 / JCM 1990 / NBRC 0083 / IGC 2968) (Yeast).